The primary structure comprises 448 residues: Zinc finger and BTB domain-containing protein 44 (448 aa).

A BTB domain is found at 31 to 98 (CDITIRVQDK…AYTATLSINT (68 aa)). Basic and acidic residues predominate over residues 289–298 (LSDEEVHEEV). A disordered region spans residues 289 to 320 (LSDEEVHEEVSQPVSASQSSMSDQQTVPGSEQ). The span at 299–313 (SQPVSASQSSMSDQQ) shows a compositional bias: low complexity. 2 consecutive C2H2-type zinc fingers follow at residues 394 to 416 (FQCP…MLIH) and 422 to 444 (FQCD…RLKH).

It is found in the nucleus. The protein is Zinc finger and BTB domain-containing protein 44 (zbtb44) of Xenopus tropicalis (Western clawed frog).